Here is a 180-residue protein sequence, read N- to C-terminus: Large ribosomal subunit protein uL5 (180 aa).

It belongs to the universal ribosomal protein uL5 family. Part of the 50S ribosomal subunit; part of the 5S rRNA/L5/L18/L25 subcomplex. Contacts the 5S rRNA and the P site tRNA. Forms a bridge to the 30S subunit in the 70S ribosome.

This is one of the proteins that bind and probably mediate the attachment of the 5S RNA into the large ribosomal subunit, where it forms part of the central protuberance. In the 70S ribosome it contacts protein S13 of the 30S subunit (bridge B1b), connecting the 2 subunits; this bridge is implicated in subunit movement. Contacts the P site tRNA; the 5S rRNA and some of its associated proteins might help stabilize positioning of ribosome-bound tRNAs. The protein is Large ribosomal subunit protein uL5 of Anaeromyxobacter dehalogenans (strain 2CP-1 / ATCC BAA-258).